Reading from the N-terminus, the 102-residue chain is Carboxysome shell protein CcmK3 (102 aa).

In terms of domain architecture, BMC spans 4 to 90 (AVGTIQTLGF…PQENVETVMP (87 aa)).

The protein belongs to the bacterial microcompartments protein family. CcmK subfamily. In terms of assembly, interacts stably with CcmK4, probably forms heterohexamers with a 1:2 CcmK3:CcmK4 stoichiometry. Bulky residues in the pore region probably preclude the formation of homohexamers by this subunit.

The protein resides in the carboxysome. Its function is as follows. A non-essential, minor shell protein of the carboxysome, a polyhedral inclusion where RuBisCO (ribulose bisphosphate carboxylase, rbcL-rbcS) is sequestered. Hexamers form sheets that form the facets of the polyhedral carboxysome. In PCC 7942 there are several CcmK paralogs with presumably functional differences. This subunit probably only makes heterohexamers with CcmK4. The CcmK3-CcmK4 heterohexmers have been suggested to cap other hexamers, perhaps to alter metabolite flux. This chain is Carboxysome shell protein CcmK3, found in Synechococcus elongatus (strain ATCC 33912 / PCC 7942 / FACHB-805) (Anacystis nidulans R2).